The primary structure comprises 237 residues: Probable GTP-binding protein EngB (237 aa).

The EngB-type G domain occupies 23–209; sequence AVPEVAFAGR…QAVIAGWLNL (187 aa). GTP contacts are provided by residues 31–38, 58–62, 82–85, 149–152, and 187–190; these read GRSNAGKS, GRTQH, DLPG, TKAD, and LFSS. Residues Ser-38 and Thr-60 each contribute to the Mg(2+) site. The disordered stretch occupies residues 214 to 237; that stretch reads KAEREPAAANSVPPAVPPASDPAA. Residues 227-237 are compositionally biased toward pro residues; the sequence is PAVPPASDPAA.

The protein belongs to the TRAFAC class TrmE-Era-EngA-EngB-Septin-like GTPase superfamily. EngB GTPase family. Mg(2+) is required as a cofactor.

In terms of biological role, necessary for normal cell division and for the maintenance of normal septation. The protein is Probable GTP-binding protein EngB of Cupriavidus taiwanensis (strain DSM 17343 / BCRC 17206 / CCUG 44338 / CIP 107171 / LMG 19424 / R1) (Ralstonia taiwanensis (strain LMG 19424)).